The sequence spans 209 residues: MSAPTKLILASASPRRVQLLQQAGLEPNRLVPAEIDETPLKAEHPRSLAKRLARSKAEKALERLRKDGEERDSFVLAADTVVAVGRRILPKTEIADEASNCLRLLSGRSHRVYTGICLFTPTGKLRHKLVETRVRFKRISREELEAYIASGEWRGKAGGYAIQGLAGSFVVKLVGSYTNVVGLPLHETVSLLAADGFKAYLNWPAGTQV.

The Proton acceptor role is filled by D79.

This sequence belongs to the Maf family. YhdE subfamily. It depends on a divalent metal cation as a cofactor.

Its subcellular location is the cytoplasm. It carries out the reaction dTTP + H2O = dTMP + diphosphate + H(+). The catalysed reaction is UTP + H2O = UMP + diphosphate + H(+). Its function is as follows. Nucleoside triphosphate pyrophosphatase that hydrolyzes dTTP and UTP. May have a dual role in cell division arrest and in preventing the incorporation of modified nucleotides into cellular nucleic acids. This is dTTP/UTP pyrophosphatase from Chelativorans sp. (strain BNC1).